The sequence spans 63 residues: Cecropin-1 (63 aa).

Positions 1 to 21 are cleaved as a signal peptide; that stretch reads MNFNKVFILVAIVIAIFAGQT. Residues 22–23 constitute a propeptide that is removed on maturation; that stretch reads EA. At arginine 62 the chain carries Arginine amide.

This sequence belongs to the cecropin family.

The protein resides in the secreted. Its function is as follows. Cecropins have lytic and antibacterial activity against several Gram-positive and Gram-negative bacteria. This Ceratitis capitata (Mediterranean fruit fly) protein is Cecropin-1 (CEC1).